A 434-amino-acid polypeptide reads, in one-letter code: UDP-glucose 6-dehydrogenase (434 aa).

NAD(+) is bound by residues 2–19, V11, D30, K35, T121, and E152; that span reads NITF…GIIM. Residues 148 to 152, K204, N208, 249 to 253, and G257 each bind substrate; these read EFLRE and FLNAG. C260 serves as the catalytic Nucleophile. Residue K263 coordinates NAD(+). K321 is a binding site for substrate. R328 contributes to the NAD(+) binding site.

Belongs to the UDP-glucose/GDP-mannose dehydrogenase family.

The enzyme catalyses UDP-alpha-D-glucose + 2 NAD(+) + H2O = UDP-alpha-D-glucuronate + 2 NADH + 3 H(+). It participates in nucleotide-sugar biosynthesis; UDP-alpha-D-glucuronate biosynthesis; UDP-alpha-D-glucuronate from UDP-alpha-D-glucose: step 1/1. The protein is UDP-glucose 6-dehydrogenase (udg) of Rickettsia typhi (strain ATCC VR-144 / Wilmington).